A 117-amino-acid chain; its full sequence is uncharacterized protein (117 aa).

It localises to the plastid. The protein resides in the chloroplast. This is an uncharacterized protein from Chlamydomonas reinhardtii (Chlamydomonas smithii).